We begin with the raw amino-acid sequence, 582 residues long: Formate--tetrahydrofolate ligase (582 aa).

T65–T72 contributes to the ATP binding site.

The protein belongs to the formate--tetrahydrofolate ligase family.

It catalyses the reaction (6S)-5,6,7,8-tetrahydrofolate + formate + ATP = (6R)-10-formyltetrahydrofolate + ADP + phosphate. Its pathway is one-carbon metabolism; tetrahydrofolate interconversion. This Vibrio cholerae serotype O1 (strain ATCC 39315 / El Tor Inaba N16961) protein is Formate--tetrahydrofolate ligase.